The chain runs to 67 residues: MNFQLDLIKDKVEFFEAASLQELEKKINTQIENNKAIMLRVKSVSHQTLVAEGRILYSAVVHFSAEA.

The stretch at 17–47 (AASLQELEKKINTQIENNKAIMLRVKSVSHQ) forms a coiled coil.

This is an uncharacterized protein from Bacillus subtilis (strain 168).